A 533-amino-acid chain; its full sequence is Protein transport protein SEC9 (533 aa).

4 disordered regions span residues 1 to 32 (MGFKKFFGIRPPEEDTPERNRDLLTEEGIATK), 68 to 184 (RPGA…MNAT), 200 to 246 (MAQD…KRAP), and 259 to 284 (PTNEDDDLNNSIHEGNEGLNGQGQAP). Positions 11–24 (PPEEDTPERNRDLL) are enriched in basic and acidic residues. A compositionally biased stretch (polar residues) spans 92–102 (GNTSRVGQPQQ). Over residues 157-172 (GGPGNPYGGSTAGAGT) the composition is skewed to gly residues. The segment covering 227-240 (RPQAAAETPRPQAA) has biased composition (low complexity). T-SNARE coiled-coil homology domains are found at residues 318–380 (RFTK…VAEL) and 470–532 (DEME…LTNI).

Belongs to the SNAP-25 family.

This chain is Protein transport protein SEC9 (SEC9), found in Eremothecium gossypii (strain ATCC 10895 / CBS 109.51 / FGSC 9923 / NRRL Y-1056) (Yeast).